Reading from the N-terminus, the 208-residue chain is Uracil phosphoribosyltransferase (208 aa).

5-phospho-alpha-D-ribose 1-diphosphate is bound by residues Arg-78, Arg-103, and 130–138 (DPMLATGGS). Residues Ile-193 and 198 to 200 (GDA) each bind uracil. Residue Asp-199 coordinates 5-phospho-alpha-D-ribose 1-diphosphate.

It belongs to the UPRTase family. It depends on Mg(2+) as a cofactor.

The catalysed reaction is UMP + diphosphate = 5-phospho-alpha-D-ribose 1-diphosphate + uracil. Its pathway is pyrimidine metabolism; UMP biosynthesis via salvage pathway; UMP from uracil: step 1/1. With respect to regulation, allosterically activated by GTP. Catalyzes the conversion of uracil and 5-phospho-alpha-D-ribose 1-diphosphate (PRPP) to UMP and diphosphate. This is Uracil phosphoribosyltransferase from Shewanella halifaxensis (strain HAW-EB4).